We begin with the raw amino-acid sequence, 497 residues long: Glucose-6-phosphate 1-dehydrogenase (497 aa).

NADP(+) is bound by residues 17-24 (GASGDLAK), arginine 51, and lysine 151. D-glucose 6-phosphate is bound by residues lysine 151, 181–185 (HYLGK), glutamate 219, and aspartate 238. Histidine 243 acts as the Proton acceptor in catalysis. Lysine 334 contacts NADP(+). D-glucose 6-phosphate-binding residues include lysine 337 and arginine 342. Residues lysine 343, arginine 347, and arginine 371 each contribute to the NADP(+) site. Glutamine 373 contacts D-glucose 6-phosphate. Residues 379–381 (YLK), 399–401 (DLS), arginine 465, and tryptophan 487 contribute to the NADP(+) site.

It belongs to the glucose-6-phosphate dehydrogenase family.

It localises to the cytoplasm. The protein resides in the cytosol. It catalyses the reaction D-glucose 6-phosphate + NADP(+) = 6-phospho-D-glucono-1,5-lactone + NADPH + H(+). It participates in carbohydrate degradation; pentose phosphate pathway; D-ribulose 5-phosphate from D-glucose 6-phosphate (oxidative stage): step 1/3. In terms of biological role, cytosolic glucose-6-phosphate dehydrogenase that catalyzes the first and rate-limiting step of the oxidative branch within the pentose phosphate pathway/shunt, an alternative route to glycolysis for the dissimilation of carbohydrates and a major source of reducing power and metabolic intermediates for fatty acid and nucleic acid biosynthetic processes. The chain is Glucose-6-phosphate 1-dehydrogenase (g6pd-1) from Dictyostelium discoideum (Social amoeba).